The chain runs to 111 residues: Cytochrome c (111 aa).

An N-acetylalanine modification is found at alanine 1. The heme c site is built by cysteine 22, cysteine 25, and histidine 26. At lysine 80 the chain carries N6,N6,N6-trimethyllysine. Methionine 88 lines the heme c pocket. Lysine 94 carries the post-translational modification N6,N6,N6-trimethyllysine.

The protein belongs to the cytochrome c family. Binds 1 heme c group covalently per subunit.

Its subcellular location is the mitochondrion intermembrane space. In terms of biological role, electron carrier protein. The oxidized form of the cytochrome c heme group can accept an electron from the heme group of the cytochrome c1 subunit of cytochrome reductase. Cytochrome c then transfers this electron to the cytochrome oxidase complex, the final protein carrier in the mitochondrial electron-transport chain. This chain is Cytochrome c, found in Cannabis sativa (Hemp).